The chain runs to 468 residues: 3-isopropylmalate dehydratase large subunit (468 aa).

3 residues coordinate [4Fe-4S] cluster: Cys-347, Cys-407, and Cys-410.

The protein belongs to the aconitase/IPM isomerase family. LeuC type 1 subfamily. Heterodimer of LeuC and LeuD. The cofactor is [4Fe-4S] cluster.

It catalyses the reaction (2R,3S)-3-isopropylmalate = (2S)-2-isopropylmalate. Its pathway is amino-acid biosynthesis; L-leucine biosynthesis; L-leucine from 3-methyl-2-oxobutanoate: step 2/4. In terms of biological role, catalyzes the isomerization between 2-isopropylmalate and 3-isopropylmalate, via the formation of 2-isopropylmaleate. This chain is 3-isopropylmalate dehydratase large subunit, found in Campylobacter jejuni subsp. jejuni serotype O:23/36 (strain 81-176).